We begin with the raw amino-acid sequence, 615 residues long: Erythritol-mannosyl-transferase 1 (615 aa).

The disordered stretch occupies residues 366–387; that stretch reads RTPNNTGASTPTAPISSPDFEE. Residues 367–380 are compositionally biased toward polar residues; sequence TPNNTGASTPTAPI.

This sequence belongs to the UDP-glycosyltransferase family.

It is found in the vacuole membrane. It participates in secondary metabolite biosynthesis. Erythritol-mannosyl-transferase; part of the gene cluster that mediates the biosynthesis of mannosylerythritol lipids (MELs), surface-active substances that enhance the availability of water-insoluble substrates. Mannosylerythritol lipid production is responsible for hemolytic activity of Ustilago maydis. Depending on the number of acetyl groups, mannosylerythritol lipids can be differentiated into MEL A (fully acetylated), MEL B and MEL C (monoacetylated at R-6 and R-4, respectively), and the fully deacetylated MEL D. The first step in the pathway is the generation of mannosylerythritol by the glycosyltransferase EMT1 which catalyzes the transfer of GDP-mannose to the C-4 atom of meso-erythritol. This reaction has to be stereospecific, since only mannosyl-D-erythritol is generated. The produced disaccharide is subsequently acylated with fatty acids of various lengths derived from the peroxisomal beta-oxidation by the peroxisomal acyltransferases MAC1 and MAC2 at positions C-2 and C-3, repectively. The existence of MEL derivatives which carry an acetyl group at C-2 implies that at least MAC1 also accepts acetyl-CoA as a donor. The final step of MEL biosynthesis is the acetylation of the fully acylated mannosylerythritol lipids catalyzed by the acetyl-CoA-dependent acetyltransferase MAT1. MAT1 displays a relaxed regioselectivity and is able to transfer acetylgroups to both positions C-4 and C-6 of the mannosyl moiety. This chain is Erythritol-mannosyl-transferase 1, found in Mycosarcoma maydis (Corn smut fungus).